Here is a 90-residue protein sequence, read N- to C-terminus: Heat shock protein beta-7 (90 aa).

The sHSP domain maps to 39-90 (PLTFPARPGGQGNIKTLGDAYEFTVDMRDFSPEDIIVTTSNNHIEVRAEKKP).

The protein belongs to the small heat shock protein (HSP20) family. In terms of assembly, interacts with C-terminal domain of actin-binding protein 280. In terms of tissue distribution, found in both cardiac and skeletal muscle.

It is found in the cytoplasm. The protein resides in the nucleus. Its subcellular location is the cajal body. The protein is Heat shock protein beta-7 (Hspb7) of Rattus norvegicus (Rat).